The sequence spans 334 residues: Thiamine-binding periplasmic protein (334 aa).

Residues 1-23 (MRLLSLLTFSLFAVIGLAPAAQA) form the signal peptide. Thiamine-binding positions include 64 to 65 (DG), 166 to 167 (AT), Trp-202, and 220 to 223 (YTTS).

It belongs to the bacterial solute-binding protein 1 family. As to quaternary structure, the complex is composed of two ATP-binding proteins (ThiQ), two transmembrane proteins (ThiP) and a solute-binding protein (ThiB).

The protein localises to the periplasm. Its function is as follows. Part of the ABC transporter complex ThiBPQ involved in thiamine import. The sequence is that of Thiamine-binding periplasmic protein (thiB) from Brucella abortus biovar 1 (strain 9-941).